A 413-amino-acid polypeptide reads, in one-letter code: MLDNSRARSIVHLLILLKAHVITQIIKNTQEFTSLCTFVKVTLKATDGLTSAASKSQTDWALGENPTSRIKKLITELETSSDRIRLGEEPNLTIQLPQGDPKQRLRRKLEVFLARAKYTEELVRQAQGDVGGRCNEAKAELEEAVTGRKGPDLETQATAAAAALHNKARGTACKVAGATTDTNFAGTSLVADLMCLCAAETNSREKHICGFESHASGVWANAGTNSNAGEIWGKILDACKNREIQVEVTPQFLRIAITKFEGLLGAQAHKLTSNGNAGAWLLGYSMNAGSVTCDGQSSTNGICVDYKGSSDARGPIAWLGHIKNAITALENRDKNLQRVRKLQRQAEAILMSAEDALIEANISLGGKDMVPASEVTVPNSSNPTSRQNSVVQEPTTVSAAAITPLILPWTLLI.

A signal peptide spans 1 to 22; sequence MLDNSRARSIVHLLILLKAHVI. 3 N-linked (GlcNAc...) asparagine glycosylation sites follow: asparagine 91, asparagine 361, and asparagine 379. Residue asparagine 379 is the site of GPI-anchor amidated asparagine attachment. Residues 380–413 constitute a propeptide, removed in mature form; it reads SSNPTSRQNSVVQEPTTVSAAAITPLILPWTLLI.

It is found in the cell membrane. Its function is as follows. VSG forms a coat on the surface of the parasite. The trypanosome evades the immune response of the host by expressing a series of antigenically distinct VSGs from an estimated 1000 VSG genes. This chain is Variant surface glycoprotein YnAT 1.3, found in Trypanosoma congolense.